The chain runs to 155 residues: Endoribonuclease YbeY (155 aa).

Zn(2+)-binding residues include His110, His114, and His120.

The protein belongs to the endoribonuclease YbeY family. Requires Zn(2+) as cofactor.

Its subcellular location is the cytoplasm. Functionally, single strand-specific metallo-endoribonuclease involved in late-stage 70S ribosome quality control and in maturation of the 3' terminus of the 16S rRNA. This Deinococcus geothermalis (strain DSM 11300 / CIP 105573 / AG-3a) protein is Endoribonuclease YbeY.